A 208-amino-acid chain; its full sequence is FAS-associated death domain protein (208 aa).

The DED domain occupies 3–81 (PFLVLLHSVS…RHDLLRRVDD (79 aa)). A Death domain is found at 97 to 181 (LCAAFNVICD…LVADLVQEVQ (85 aa)). A glycan ((Microbial infection) N-beta-linked (GlcNAc) arginine) is linked at Arg117. The interval 187–208 (QNRSGAMSPMSWNSDASTSEAS) is disordered. Position 194 is a phosphoserine (Ser194).

As to quaternary structure, can self-associate. Component of the AIM2 PANoptosome complex, a multiprotein complex that drives inflammatory cell death (PANoptosis). Component of the death-induced signaling complex (DISC) composed of cell surface receptor FAS/CD95 or TNFRSF1A, adapter protein FADD and the CASP8 protease; recruitment of CASP8 to the complex is required for processing of CASP8 into the p18 and p10 subunits. Interacts (via death domain) with FAS (via death domain). Interacts directly (via DED domain) with NOL3 (via CARD domain); inhibits death-inducing signaling complex (DISC) assembly by inhibiting the increase in FAS-FADD binding induced by FAS activation. Interacts with CFLAR, PEA15 and MBD4. When phosphorylated, part of a complex containing HIPK3 and FAS. May interact with MAVS/IPS1. Interacts with MOCV v-CFLAR protein and PIDD1. Interacts with RIPK1 and TRADD. Interacts with stimulated TNFRSF10B. Interacts with DDX24. (Microbial infection) Interacts with human papillomavirus 16/HPV16 protein E6. In terms of assembly, (Microbial infection) Interacts with molluscum contagiosum virus proteins MC159L/v-CFLAR and MC160L. Post-translationally, (Microbial infection) Glycosylated at Arg-117 by enteropathogenic E.coli protein NleB1, C.rodentium protein NleB and S.typhimurium protein Ssek1: arginine GlcNAcylation prevents recruitment of caspase-8 or caspase-10 to the activated Fas (CD95) or TNFR-1 receptors. As to expression, expressed in a wide variety of tissues, except for peripheral blood mononuclear leukocytes.

Its subcellular location is the cytoplasm. In terms of biological role, apoptotic adapter molecule that recruits caspases CASP8 or CASP10 to the activated FAS/CD95 or TNFRSF1A/TNFR-1 receptors. The resulting aggregate called the death-inducing signaling complex (DISC) performs CASP8 proteolytic activation. Active CASP8 initiates the subsequent cascade of caspases mediating apoptosis. Involved in interferon-mediated antiviral immune response, playing a role in the positive regulation of interferon signaling. The polypeptide is FAS-associated death domain protein (Homo sapiens (Human)).